We begin with the raw amino-acid sequence, 228 residues long: MSVDIAVVDYGMGNLRSVSKAIEHVAPSATVVVTSSPDVIAEAGRVVFPGQGAARDCMREIDARGLREAIATAARSKPFLGICMGMQVLFEHSEEGDTACLGILPGNVQRFPHEAMHDDRGNKLKVPHMGWNNVHQGAPHPLWSGIEDGERFYFVHSYFVQPTTPDLIAGFSHYPFPFTCAVASGNIFAVQFHPEKSQNAGLTLLGNFVTWNPGEHASACDLSGASCA.

The 215-residue stretch at 4–218 folds into the Glutamine amidotransferase type-1 domain; sequence DIAVVDYGMG…VTWNPGEHAS (215 aa). Cysteine 83 (nucleophile) is an active-site residue. Active-site residues include histidine 193 and glutamate 195.

As to quaternary structure, heterodimer of HisH and HisF.

It localises to the cytoplasm. It catalyses the reaction 5-[(5-phospho-1-deoxy-D-ribulos-1-ylimino)methylamino]-1-(5-phospho-beta-D-ribosyl)imidazole-4-carboxamide + L-glutamine = D-erythro-1-(imidazol-4-yl)glycerol 3-phosphate + 5-amino-1-(5-phospho-beta-D-ribosyl)imidazole-4-carboxamide + L-glutamate + H(+). The catalysed reaction is L-glutamine + H2O = L-glutamate + NH4(+). It participates in amino-acid biosynthesis; L-histidine biosynthesis; L-histidine from 5-phospho-alpha-D-ribose 1-diphosphate: step 5/9. In terms of biological role, IGPS catalyzes the conversion of PRFAR and glutamine to IGP, AICAR and glutamate. The HisH subunit catalyzes the hydrolysis of glutamine to glutamate and ammonia as part of the synthesis of IGP and AICAR. The resulting ammonia molecule is channeled to the active site of HisF. The sequence is that of Imidazole glycerol phosphate synthase subunit HisH from Thiobacillus denitrificans (strain ATCC 25259 / T1).